The following is a 1155-amino-acid chain: Protein BREAST CANCER SUSCEPTIBILITY 2 homolog B (1155 aa).

4 BRCA2 repeats span residues 63–97 (MPGE…ENVA), 116–150 (TAET…SDMI), 163–197 (FGVP…LEED), and 257–291 (LKVP…DPEL).

In terms of assembly, interacts with RAD51 and DMC1. Interacts with DSS1(I) and DSS1(V). Can interact with both RAD51 and DSS1(I) or both DMC1 and DSS1(I) in a tripartite complex. In terms of tissue distribution, expressed in flower buds.

In terms of biological role, involved in double-strand break repair and/or homologous recombination by mediating RAD51- and DMC1-facilitated DNA repair. Plays an essential role in both somatic and meiotic homologous recombination. Is crucial for the formation of RAD51 and DMC1 foci during male meiotic homologous recombination in prophase I. The polypeptide is Protein BREAST CANCER SUSCEPTIBILITY 2 homolog B (Arabidopsis thaliana (Mouse-ear cress)).